The primary structure comprises 337 residues: MFDRIWFKSSFFYLFLLPFSWLYGVISTLNRISYQYGWRKVYRFSVPIIIIGNLTIGGNGKTPMVLWLVEHLKRRGWKVGVISRGYKGKSNNYPIIINMNSHSEECGDEPMLIWKRTGVSVAVSPKRADAVAALLRKQELDIIISDDGLQHYALFRDIEWVIVNSVLRFGNGCWLPAGPMRERINRLHTVQAIIANGSEVGIQSGEVLMQLFPIAVVNILTGERKPLYFLNNVVAIAGIGYPTQFFDTLRSYGIIPIRSISFSDHHVYSEKMLTSLTKKDEILLMTEKDAVKCIDFAHDNWWYVHTEVKINKIDTHNLLSMVENKIRYYKGSRYNVQ.

Thr55–Thr62 contacts ATP.

The protein belongs to the LpxK family.

It catalyses the reaction a lipid A disaccharide + ATP = a lipid IVA + ADP + H(+). Its pathway is glycolipid biosynthesis; lipid IV(A) biosynthesis; lipid IV(A) from (3R)-3-hydroxytetradecanoyl-[acyl-carrier-protein] and UDP-N-acetyl-alpha-D-glucosamine: step 6/6. In terms of biological role, transfers the gamma-phosphate of ATP to the 4'-position of a tetraacyldisaccharide 1-phosphate intermediate (termed DS-1-P) to form tetraacyldisaccharide 1,4'-bis-phosphate (lipid IVA). The chain is Tetraacyldisaccharide 4'-kinase from Blochmanniella pennsylvanica (strain BPEN).